The primary structure comprises 376 residues: Sulfate/thiosulfate import ATP-binding protein CysA (376 aa).

The ABC transporter domain maps to 3-237; it reads IRLDNISKHF…PNSRFVFDFF (235 aa). An ATP-binding site is contributed by 35 to 42; that stretch reads GPSGSGKT.

It belongs to the ABC transporter superfamily. Sulfate/tungstate importer (TC 3.A.1.6) family. The complex is composed of two ATP-binding proteins (CysA), two transmembrane proteins (CysT and CysW) and a solute-binding protein (CysP).

The protein localises to the cell inner membrane. The catalysed reaction is sulfate(out) + ATP + H2O = sulfate(in) + ADP + phosphate + H(+). The enzyme catalyses thiosulfate(out) + ATP + H2O = thiosulfate(in) + ADP + phosphate + H(+). Part of the ABC transporter complex CysAWTP involved in sulfate/thiosulfate import. Responsible for energy coupling to the transport system. This chain is Sulfate/thiosulfate import ATP-binding protein CysA, found in Vibrio cholerae serotype O1 (strain ATCC 39315 / El Tor Inaba N16961).